The chain runs to 279 residues: ANKRPAWIMGHMVNAIAQIDEFVNLGANSIETDVSFDSSANPEYTYHGIPCDCGRTCTKWENFNDFLVGLRKATTPDDSNYHEKLILVVFDLKTGSLYDNQAYDAGKKLAKSILQHYWNNGNNGGRAYIVLSIPNLAHYKLITGFKETLTSDGHPELMDKIGYDFSGNDAIGDVASAYQKAGVTGHVWQSDGITNCLLRGLSRVREAVANRDSSNGYINKVYYWTVDKRASTRDALDAGVDGIMTNYPDVIADVLSESAYSAKFRIATYDDNPWETFKN.

Residue His11 is part of the active site. 2 residues coordinate Mg(2+): Glu31 and Asp33. Catalysis depends on His47, which acts as the Nucleophile. Disulfide bonds link Cys51–Cys57 and Cys53–Cys196. Asp91 contributes to the Mg(2+) binding site.

Belongs to the arthropod phospholipase D family. Class II subfamily. Class IIa sub-subfamily. The cofactor is Mg(2+). Expressed by the venom gland.

The protein resides in the secreted. The catalysed reaction is an N-(acyl)-sphingosylphosphocholine = an N-(acyl)-sphingosyl-1,3-cyclic phosphate + choline. It catalyses the reaction an N-(acyl)-sphingosylphosphoethanolamine = an N-(acyl)-sphingosyl-1,3-cyclic phosphate + ethanolamine. The enzyme catalyses a 1-acyl-sn-glycero-3-phosphocholine = a 1-acyl-sn-glycero-2,3-cyclic phosphate + choline. It carries out the reaction a 1-acyl-sn-glycero-3-phosphoethanolamine = a 1-acyl-sn-glycero-2,3-cyclic phosphate + ethanolamine. Functionally, dermonecrotic toxins cleave the phosphodiester linkage between the phosphate and headgroup of certain phospholipids (sphingolipid and lysolipid substrates), forming an alcohol (often choline) and a cyclic phosphate. This toxin acts on sphingomyelin (SM) with high activity (about 30.5-31.5 U/mg). It may also act on ceramide phosphoethanolamine (CPE), lysophosphatidylcholine (LPC) and lysophosphatidylethanolamine (LPE), but not on lysophosphatidylserine (LPS), and lysophosphatidylglycerol (LPG). It acts by transphosphatidylation, releasing exclusively cyclic phosphate products as second products. Induces dermonecrosis, hemolysis, increased vascular permeability, edema, inflammatory response, and platelet aggregation. Is lethal to mice. In Loxosceles boneti (North American fiddleback spider), this protein is Dermonecrotic toxin LbSicTox-alphaIB1a.